We begin with the raw amino-acid sequence, 854 residues long: Nucleolar MIF4G domain-containing protein 1 homolog (854 aa).

4 disordered regions span residues 1–38 (MAKI…FAGK), 55–105 (QSQL…DAEV), 120–161 (PLGK…KQRI), and 217–306 (RKWE…RDAE). The segment covering 15–28 (TRKEQRKQKSEFKK) has biased composition (basic and acidic residues). Basic residues predominate over residues 60 to 71 (KNKKKKRSKKPK). Residues 88–105 (IDSDDDESIDSDFSDAEV) show a composition bias toward acidic residues. Composition is skewed to basic and acidic residues over residues 135-156 (RQDE…ESKS) and 217-238 (RKWE…KEEA). Positions 242 to 289 (SDEEEDKEDRDEPMDNFSEDDSGSEGEDDDEDLTGEEEQSEEDSEQEE) are enriched in acidic residues. Residues 290–306 (NAPKIKEDIYGRKRDAE) are compositionally biased toward basic and acidic residues. The MIF4G domain occupies 352-553 (LKQCKGLLNR…DILNAVKNNN (202 aa)). The region spanning 650–764 (AERRNIFCII…QLSVLKVVDF (115 aa)) is the MI domain.

Belongs to the CWC22 family.

The protein resides in the nucleus. It is found in the nucleolus. The protein is Nucleolar MIF4G domain-containing protein 1 homolog of Drosophila melanogaster (Fruit fly).